The chain runs to 1058 residues: Carbamoyl phosphate synthase large chain (1058 aa).

The tract at residues 1 to 401 is carboxyphosphate synthetic domain; the sequence is MPKRTDIQKI…SLLKACRSLE (401 aa). 12 residues coordinate ATP: arginine 129, arginine 169, glycine 175, glycine 176, arginine 208, isoleucine 210, glutamate 215, glycine 241, isoleucine 242, histidine 243, glutamine 284, and glutamate 298. An ATP-grasp 1 domain is found at 133–327; sequence KQLMEELEQP…IAKLAAKIAV (195 aa). 3 residues coordinate Mg(2+): glutamine 284, glutamate 298, and asparagine 300. 3 residues coordinate Mn(2+): glutamine 284, glutamate 298, and asparagine 300. The segment at 402-546 is oligomerization domain; it reads IGVHHNEIPE…YSTYGWENES (145 aa). Residues 547–929 are carbamoyl phosphate synthetic domain; sequence IRSDKESVLV…ALYKAFEASY (383 aa). One can recognise an ATP-grasp 2 domain in the interval 671-861; it reads EQALKELDIP…MAQVATKLIL (191 aa). Arginine 707, serine 746, isoleucine 748, glutamate 752, glycine 777, valine 778, histidine 779, serine 780, glutamine 820, and glutamate 832 together coordinate ATP. Glutamine 820, glutamate 832, and asparagine 834 together coordinate Mg(2+). The Mn(2+) site is built by glutamine 820, glutamate 832, and asparagine 834. Residues 930-1058 enclose the MGS-like domain; the sequence is LHLPTFGNVV…ESRSFVTEAI (129 aa). The allosteric domain stretch occupies residues 930–1058; the sequence is LHLPTFGNVV…ESRSFVTEAI (129 aa).

Belongs to the CarB family. In terms of assembly, composed of two chains; the small (or glutamine) chain promotes the hydrolysis of glutamine to ammonia, which is used by the large (or ammonia) chain to synthesize carbamoyl phosphate. Tetramer of heterodimers (alpha,beta)4. The cofactor is Mg(2+). Requires Mn(2+) as cofactor.

It carries out the reaction hydrogencarbonate + L-glutamine + 2 ATP + H2O = carbamoyl phosphate + L-glutamate + 2 ADP + phosphate + 2 H(+). The catalysed reaction is hydrogencarbonate + NH4(+) + 2 ATP = carbamoyl phosphate + 2 ADP + phosphate + 2 H(+). It participates in amino-acid biosynthesis; L-arginine biosynthesis; carbamoyl phosphate from bicarbonate: step 1/1. It functions in the pathway pyrimidine metabolism; UMP biosynthesis via de novo pathway; (S)-dihydroorotate from bicarbonate: step 1/3. Large subunit of the glutamine-dependent carbamoyl phosphate synthetase (CPSase). CPSase catalyzes the formation of carbamoyl phosphate from the ammonia moiety of glutamine, carbonate, and phosphate donated by ATP, constituting the first step of 2 biosynthetic pathways, one leading to arginine and/or urea and the other to pyrimidine nucleotides. The large subunit (synthetase) binds the substrates ammonia (free or transferred from glutamine from the small subunit), hydrogencarbonate and ATP and carries out an ATP-coupled ligase reaction, activating hydrogencarbonate by forming carboxy phosphate which reacts with ammonia to form carbamoyl phosphate. This is Carbamoyl phosphate synthase large chain from Streptococcus pneumoniae (strain 70585).